The sequence spans 333 residues: Ketol-acid reductoisomerase (NADP(+)) (333 aa).

A KARI N-terminal Rossmann domain is found at 1-179 (MFYDDDADLT…GGTRAGVIKT (179 aa)). NADP(+)-binding positions include 22-25 (YGSQ), lysine 45, serine 48, serine 50, and 80-83 (DTAQ). Residue histidine 105 is part of the active site. Position 131 (glycine 131) interacts with NADP(+). Residues 180-325 (TFKDETETDL…KRLRDLMSWV (146 aa)) enclose the KARI C-terminal knotted domain. Mg(2+)-binding residues include aspartate 188, glutamate 192, glutamate 224, and glutamate 228. Serine 249 lines the substrate pocket.

Belongs to the ketol-acid reductoisomerase family. Requires Mg(2+) as cofactor.

The catalysed reaction is (2R)-2,3-dihydroxy-3-methylbutanoate + NADP(+) = (2S)-2-acetolactate + NADPH + H(+). It carries out the reaction (2R,3R)-2,3-dihydroxy-3-methylpentanoate + NADP(+) = (S)-2-ethyl-2-hydroxy-3-oxobutanoate + NADPH + H(+). The protein operates within amino-acid biosynthesis; L-isoleucine biosynthesis; L-isoleucine from 2-oxobutanoate: step 2/4. It participates in amino-acid biosynthesis; L-valine biosynthesis; L-valine from pyruvate: step 2/4. Its function is as follows. Involved in the biosynthesis of branched-chain amino acids (BCAA). Catalyzes an alkyl-migration followed by a ketol-acid reduction of (S)-2-acetolactate (S2AL) to yield (R)-2,3-dihydroxy-isovalerate. In the isomerase reaction, S2AL is rearranged via a Mg-dependent methyl migration to produce 3-hydroxy-3-methyl-2-ketobutyrate (HMKB). In the reductase reaction, this 2-ketoacid undergoes a metal-dependent reduction by NADPH to yield (R)-2,3-dihydroxy-isovalerate. This Mycobacterium avium protein is Ketol-acid reductoisomerase (NADP(+)).